Reading from the N-terminus, the 173-residue chain is Probable glutathione peroxidase 5 (173 aa).

Glycine 2 carries N-myristoyl glycine lipidation. The active site involves cysteine 46.

The protein belongs to the glutathione peroxidase family. As to expression, ubiquitous.

It localises to the cell membrane. The enzyme catalyses 2 glutathione + H2O2 = glutathione disulfide + 2 H2O. Functionally, may constitute a glutathione peroxidase-like protective system against oxidative stresses. The protein is Probable glutathione peroxidase 5 (GPX5) of Arabidopsis thaliana (Mouse-ear cress).